The chain runs to 201 residues: MKTVLLATNNENKVNEIKDILCELNLKVVSLKEVGINVEVEEDELTFMGNALKKALTLYNMIDDKKYMVLADDSGLSVDVLGGAPGVFSARYAGEHGNSKANNEKLLEDMKGLKNRKGKFICAMALVIDKDNIIKVQGEVEGSIGYEEKGDNGFGYDPLFFVSKYNMTFAEMDKDIKNSISHRRDALNKIKEKLKSYIEDK.

8–13 (TNNENK) contacts substrate. Positions 41 and 73 each coordinate Mg(2+). The active-site Proton acceptor is the Asp73. Residues Ser74, 154-157 (FGYD), Lys177, and 182-183 (HR) each bind substrate.

It belongs to the HAM1 NTPase family. In terms of assembly, homodimer. Mg(2+) is required as a cofactor.

It carries out the reaction XTP + H2O = XMP + diphosphate + H(+). It catalyses the reaction dITP + H2O = dIMP + diphosphate + H(+). The enzyme catalyses ITP + H2O = IMP + diphosphate + H(+). In terms of biological role, pyrophosphatase that catalyzes the hydrolysis of nucleoside triphosphates to their monophosphate derivatives, with a high preference for the non-canonical purine nucleotides XTP (xanthosine triphosphate), dITP (deoxyinosine triphosphate) and ITP. Seems to function as a house-cleaning enzyme that removes non-canonical purine nucleotides from the nucleotide pool, thus preventing their incorporation into DNA/RNA and avoiding chromosomal lesions. This is dITP/XTP pyrophosphatase from Clostridium tetani (strain Massachusetts / E88).